We begin with the raw amino-acid sequence, 370 residues long: MSKKRIVVGMSGGVDSSVTAWLLKQQGYDVVGLFMKNWEDDDDSEYCSTRQDWIDVVSVADLIGVDVEAVNFAAEYKDRVFADFLREYSAGRTPNPDVLCNAEIKFKAFLDHAMALGADTIATGHYARVREVDGRFELLKAFDHTKDQSYFLHRLNQAQLSRTLFPLGEMPKTKVREIAAEIGLPNAKKKDSTGICFIGERPFRDFLNRYLPTKPGPIKTPDGKTIGEHIGLAFYTLGQRKGIGIGGSRDGTGDAWYVARKDMAANTLYVVQGHDHPWLLAHTVHADDLSWVAGHAPAEGTHLGAKTRYRQADAPCTVARAAGGALTLTFSEAQWAVTPGQSAVLYDGEVCLGGGIISAAEPAVVEKAIA.

Residues 9-16 (GMSGGVDS) and M35 each bind ATP. An interaction with target base in tRNA region spans residues 95–97 (NPD). C100 serves as the catalytic Nucleophile. Cysteines 100 and 196 form a disulfide. G124 serves as a coordination point for ATP. The segment at 146 to 148 (KDQ) is interaction with tRNA. C196 functions as the Cysteine persulfide intermediate in the catalytic mechanism. Residues 308–309 (RY) are interaction with tRNA.

Belongs to the MnmA/TRMU family.

Its subcellular location is the cytoplasm. It catalyses the reaction S-sulfanyl-L-cysteinyl-[protein] + uridine(34) in tRNA + AH2 + ATP = 2-thiouridine(34) in tRNA + L-cysteinyl-[protein] + A + AMP + diphosphate + H(+). Functionally, catalyzes the 2-thiolation of uridine at the wobble position (U34) of tRNA, leading to the formation of s(2)U34. The sequence is that of tRNA-specific 2-thiouridylase MnmA from Ralstonia pickettii (strain 12J).